The chain runs to 254 residues: Phosphoglycerate mutase 1 (254 aa).

Residues 10-17 (RHGESTWN) and 23-24 (SG) contribute to the substrate site. Histidine 11 serves as the catalytic Tele-phosphohistidine intermediate. Phosphoserine occurs at positions 14 and 23. At tyrosine 26 the chain carries Phosphotyrosine. Phosphoserine is present on serine 31. Substrate-binding positions include arginine 62, 89-92 (ERHY), and lysine 100. The active-site Proton donor/acceptor is glutamate 89. Residue lysine 106 is modified to N6-acetyllysine. 116–117 (RR) lines the substrate pocket. At serine 118 the chain carries Phosphoserine. 187–188 (GN) is a substrate binding site. Lysine 251 bears the N6-acetyllysine; alternate mark. Lysine 251 carries the post-translational modification N6-succinyllysine; alternate. An N6-acetyllysine mark is found at lysine 253 and lysine 254.

This sequence belongs to the phosphoglycerate mutase family. BPG-dependent PGAM subfamily. In terms of assembly, homodimer. In terms of processing, acetylated at Lys-253, Lys-253 and Lys-254 under high glucose condition. Acetylation increases catalytic activity. Under glucose restriction SIRT1 levels dramatically increase and it deacetylates the enzyme.

The catalysed reaction is (2R)-2-phosphoglycerate = (2R)-3-phosphoglycerate. The enzyme catalyses (2R)-3-phospho-glyceroyl phosphate = (2R)-2,3-bisphosphoglycerate + H(+). In terms of biological role, catalyzes the interconversion of 2-phosphoglycerate and 3-phosphoglyceratea crucial step in glycolysis, by using 2,3-bisphosphoglycerate. Also catalyzes the interconversion of (2R)-2,3-bisphosphoglycerate and (2R)-3-phospho-glyceroyl phosphate. This Bos taurus (Bovine) protein is Phosphoglycerate mutase 1.